Consider the following 278-residue polypeptide: Ribosomal protein L11 methyltransferase (278 aa).

Thr131, Gly152, Asp173, and Asn214 together coordinate S-adenosyl-L-methionine.

It belongs to the methyltransferase superfamily. PrmA family.

The protein resides in the cytoplasm. The catalysed reaction is L-lysyl-[protein] + 3 S-adenosyl-L-methionine = N(6),N(6),N(6)-trimethyl-L-lysyl-[protein] + 3 S-adenosyl-L-homocysteine + 3 H(+). Its function is as follows. Methylates ribosomal protein L11. The polypeptide is Ribosomal protein L11 methyltransferase (Campylobacter lari (strain RM2100 / D67 / ATCC BAA-1060)).